The sequence spans 115 residues: DNA-binding protein STK_13740 (115 aa).

This sequence belongs to the PDCD5 family.

The chain is DNA-binding protein STK_13740 from Sulfurisphaera tokodaii (strain DSM 16993 / JCM 10545 / NBRC 100140 / 7) (Sulfolobus tokodaii).